We begin with the raw amino-acid sequence, 166 residues long: Tegument protein UL55 homolog (166 aa).

This sequence belongs to the alphaherpesvirinae HHV-1 UL55 family.

Its subcellular location is the virion tegument. It localises to the host nucleus matrix. This Gallid herpesvirus 2 (strain Chicken/Md5/ATCC VR-987) (GaHV-2) protein is Tegument protein UL55 homolog (MDV070).